A 705-amino-acid polypeptide reads, in one-letter code: Kinesin-like protein KIF2A (705 aa).

Positions 65–185 (DLVPDEDIEP…QQELREKRAQ (121 aa)) are disordered. Position 75 is a phosphoserine (S75). Position 96 is a phosphothreonine (T96). At S99 the chain carries Phosphoserine. The residue at position 101 (K101) is an N6-acetyllysine. The span at 122–139 (LPEQSSSAQQNGSVSDIS) shows a compositional bias: polar residues. 2 positions are modified to phosphoserine: S134 and S139. Residues 153–186 (RRKSNCVKEVEKLQEKREKRRLQQQELREKRAQD) are a coiled coil. Residues 158 to 185 (CVKEVEKLQEKREKRRLQQQELREKRAQ) show a composition bias toward basic and acidic residues. The 331-residue stretch at 222–552 (RICVCVRKRP…LRYANRVKEL (331 aa)) folds into the Kinesin motor domain. 312-319 (GQTGSGKT) serves as a coordination point for ATP. Q572 carries the phosphoserine modification. Residues 659-698 (ATQLEAILEQKIDILTELRDKVKSFRAALQEEEQASKQIN) are a coiled coil.

It belongs to the TRAFAC class myosin-kinesin ATPase superfamily. Kinesin family. MCAK/KIF2 subfamily. In terms of assembly, interacts with AURKA and PLK1. Interacts with PSRC1. Interacts with MCRS1; the interaction enhances recruitment of KIF2A to the minus ends of spindle microtubules which promotes chromosome alignment.

It localises to the cytoplasm. Its subcellular location is the cytoskeleton. The protein localises to the microtubule organizing center. It is found in the centrosome. The protein resides in the spindle pole. It localises to the spindle. Plus end-directed microtubule-dependent motor required for normal brain development. May regulate microtubule dynamics during axonal growth. Required for normal progression through mitosis. Required for normal congress of chromosomes at the metaphase plate. Required for normal spindle dynamics during mitosis. Promotes spindle turnover. Implicated in formation of bipolar mitotic spindles. Has microtubule depolymerization activity. This is Kinesin-like protein KIF2A from Rattus norvegicus (Rat).